We begin with the raw amino-acid sequence, 108 residues long: uncharacterized protein (108 aa).

A run of 2 helical transmembrane segments spans residues 32–52 (YFFF…LLAI) and 68–88 (SYLL…LVVG).

The protein resides in the membrane. This is an uncharacterized protein from Saccharomyces cerevisiae (strain ATCC 204508 / S288c) (Baker's yeast).